We begin with the raw amino-acid sequence, 723 residues long: Calpastatin (723 aa).

2 disordered regions span residues 1–402 (MNPT…PGRC) and 422–509 (STHS…LPPL). Over residues 21–30 (PNKKRHKKQA) the composition is skewed to basic residues. Lys32 participates in a covalent cross-link: Glycyl lysine isopeptide (Lys-Gly) (interchain with G-Cter in SUMO2). Over residues 46-84 (VVHEKKTQEVKPKEHTEPKSQPKHPSDTRSKHAPKEKAV) the composition is skewed to basic and acidic residues. The residue at position 50 (Lys50) is an N6-acetyllysine. 2 stretches are compositionally biased toward low complexity: residues 85-94 (SKSSEQPPSE) and 113-125 (SAVP…ASAE). At Ser87 the chain carries Phosphoserine. The residue at position 137 (Thr137) is a Phosphothreonine. The segment covering 157–173 (TALDDLIDTLGEPEETK) has biased composition (acidic residues). One copy of the Inhibitory domain 1 repeat lies at 171-224 (ETKEDTTTYTGPEVSDPMSSTYIEELGKREVTLPPKYRELLNKEEGIAGPPPDS). The span at 195–216 (ELGKREVTLPPKYRELLNKEEG) shows a compositional bias: basic and acidic residues. A phosphoserine mark is found at Ser224 and Ser245. 2 stretches are compositionally biased toward basic and acidic residues: residues 249–263 (DAKK…EEAL) and 306–367 (PRPE…KPLS). One copy of the Inhibitory domain 2 repeat lies at 307–359 (RPELDPSSIKEVDEAKAKEEKVKKCGEDEERVPSEYRLKPATDKDGKPLLPEA). Phosphoserine occurs at positions 367, 369, and 376. Positions 378–396 (DFDRSKCKEKQSKPTEKNR) are enriched in basic and acidic residues. At Ser443 the chain carries Phosphoserine. Basic and acidic residues predominate over residues 445–504 (GKKEADPEDGKPVEDKVKEKAKEEDREKLGEREETIPPDYRLEEAKDKDGKPLPPKEVKE). An Inhibitory domain 3 repeat occupies 449–502 (ADPEDGKPVEDKVKEKAKEEDREKLGEREETIPPDYRLEEAKDKDGKPLPPKEV). Residues Ser519 and Ser530 each carry the phosphoserine modification. Residues 547-723 (SQTPAPTTQA…KPKADGKSTS (177 aa)) are disordered. Residues 548–560 (QTPAPTTQAAGPP) show a composition bias toward low complexity. Residues 562–571 (DSARDNKELD) show a composition bias toward basic and acidic residues. Phosphoserine is present on residues Ser578 and Ser580. The Inhibitory domain 4 repeat unit spans residues 586–642 (PDPDEHKPVEDKVKEKAKAEHRDKLGERDDTIPPKYQHLLDDNKEGTPGKPKRSESP). Over residues 586–643 (PDPDEHKPVEDKVKEKAKAEHRDKLGERDDTIPPKYQHLLDDNKEGTPGKPKRSESPR) the composition is skewed to basic and acidic residues. A compositionally biased stretch (polar residues) spans 653 to 670 (NLQVPRTPLTPSQGTWTA). Over residues 672-690 (PQLQKPQQTQQRTKTRSLL) the composition is skewed to low complexity. A compositionally biased stretch (basic and acidic residues) spans 701 to 723 (KAKDSTKAKEETSKPKADGKSTS).

Belongs to the protease inhibitor I27 (calpastatin) family.

Its function is as follows. Specific inhibition of calpain (calcium-dependent cysteine protease). Plays a key role in postmortem tenderization of meat and have been proposed to be involved in muscle protein degradation in living tissue. In Ovis aries (Sheep), this protein is Calpastatin (CAST).